The sequence spans 340 residues: 4-amino-5-hydroxymethyl-2-methylpyrimidine phosphate synthase THI5 (340 aa).

K62 bears the N6-(pyridoxal phosphate)lysine mark. H66 is an active-site residue. 115-118 (GEFG) is a pyridoxal 5'-phosphate binding site. The short motif at 195 to 199 (CCCFC) is the CCCFC; essential for catalytic activity, may be the site of iron coordination element.

It belongs to the NMT1/THI5 family. As to quaternary structure, homodimer. Fe cation is required as a cofactor.

It carries out the reaction N(6)-(pyridoxal phosphate)-L-lysyl-[4-amino-5-hydroxymethyl-2-methylpyrimidine phosphate synthase] + L-histidyl-[4-amino-5-hydroxymethyl-2-methylpyrimidine phosphate synthase] + 2 Fe(3+) + 4 H2O = L-lysyl-[4-amino-5-hydroxymethyl-2-methylpyrimidine phosphate synthase] + (2S)-2-amino-5-hydroxy-4-oxopentanoyl-[4-amino-5-hydroxymethyl-2-methylpyrimidine phosphate synthase] + 4-amino-2-methyl-5-(phosphooxymethyl)pyrimidine + 3-oxopropanoate + 2 Fe(2+) + 2 H(+). It participates in cofactor biosynthesis; thiamine diphosphate biosynthesis. In terms of biological role, responsible for the formation of the pyrimidine heterocycle in the thiamine biosynthesis pathway. Catalyzes the formation of hydroxymethylpyrimidine phosphate (HMP-P) from histidine and pyridoxal phosphate (PLP). The protein uses PLP and the active site histidine to form HMP-P, generating an inactive enzyme. The enzyme can only undergo a single turnover, which suggests it is a suicide enzyme. The polypeptide is 4-amino-5-hydroxymethyl-2-methylpyrimidine phosphate synthase THI5 (Saccharomyces cerevisiae (strain ATCC 204508 / S288c) (Baker's yeast)).